The primary structure comprises 156 residues: Ribosomal RNA large subunit methyltransferase H (156 aa).

S-adenosyl-L-methionine-binding positions include Leu-73, Gly-104, and 123-128 (LSSLTL).

The protein belongs to the RNA methyltransferase RlmH family. As to quaternary structure, homodimer.

It localises to the cytoplasm. The enzyme catalyses pseudouridine(1915) in 23S rRNA + S-adenosyl-L-methionine = N(3)-methylpseudouridine(1915) in 23S rRNA + S-adenosyl-L-homocysteine + H(+). In terms of biological role, specifically methylates the pseudouridine at position 1915 (m3Psi1915) in 23S rRNA. The protein is Ribosomal RNA large subunit methyltransferase H of Neisseria meningitidis serogroup A / serotype 4A (strain DSM 15465 / Z2491).